We begin with the raw amino-acid sequence, 395 residues long: Putative 8-amino-7-oxononanoate synthase (395 aa).

Substrate is bound at residue Arg23. 110-111 (GY) is a pyridoxal 5'-phosphate binding site. His135 contacts substrate. Pyridoxal 5'-phosphate-binding positions include Ser182, 207-210 (DEAH), and 239-242 (TFSK). N6-(pyridoxal phosphate)lysine is present on Lys242. Thr356 is a substrate binding site.

This sequence belongs to the class-II pyridoxal-phosphate-dependent aminotransferase family. BioF subfamily. As to quaternary structure, homodimer. Requires pyridoxal 5'-phosphate as cofactor.

The catalysed reaction is 6-carboxyhexanoyl-[ACP] + L-alanine + H(+) = (8S)-8-amino-7-oxononanoate + holo-[ACP] + CO2. It functions in the pathway cofactor biosynthesis; biotin biosynthesis. In terms of biological role, catalyzes the decarboxylative condensation of pimeloyl-[acyl-carrier protein] and L-alanine to produce 8-amino-7-oxononanoate (AON), [acyl-carrier protein], and carbon dioxide. This Bacillus cereus (strain G9842) protein is Putative 8-amino-7-oxononanoate synthase (bioF).